Here is a 161-residue protein sequence, read N- to C-terminus: Large ribosomal subunit protein uL16 (161 aa).

This sequence belongs to the universal ribosomal protein uL16 family.

The protein is Large ribosomal subunit protein uL16 of Methanosphaera stadtmanae (strain ATCC 43021 / DSM 3091 / JCM 11832 / MCB-3).